A 635-amino-acid polypeptide reads, in one-letter code: 1-deoxy-D-xylulose-5-phosphate synthase (635 aa).

Thiamine diphosphate-binding positions include His-79 and Gly-120–Ser-122. Asp-151 serves as a coordination point for Mg(2+). Thiamine diphosphate-binding positions include Gly-152–Ala-153, Asn-182, Tyr-291, and Glu-372. Asn-182 is a binding site for Mg(2+).

This sequence belongs to the transketolase family. DXPS subfamily. In terms of assembly, homodimer. Mg(2+) is required as a cofactor. Thiamine diphosphate serves as cofactor.

The catalysed reaction is D-glyceraldehyde 3-phosphate + pyruvate + H(+) = 1-deoxy-D-xylulose 5-phosphate + CO2. It participates in metabolic intermediate biosynthesis; 1-deoxy-D-xylulose 5-phosphate biosynthesis; 1-deoxy-D-xylulose 5-phosphate from D-glyceraldehyde 3-phosphate and pyruvate: step 1/1. Catalyzes the acyloin condensation reaction between C atoms 2 and 3 of pyruvate and glyceraldehyde 3-phosphate to yield 1-deoxy-D-xylulose-5-phosphate (DXP). This chain is 1-deoxy-D-xylulose-5-phosphate synthase, found in Xylella fastidiosa (strain M12).